A 379-amino-acid polypeptide reads, in one-letter code: L-lactate dehydrogenase (379 aa).

The 379-residue stretch at 1 to 379 folds into the FMN hydroxy acid dehydrogenase domain; the sequence is MIISASTDYR…LSRDSLVKIP (379 aa). A substrate-binding site is contributed by Y24. FMN-binding residues include S106 and Q127. Substrate is bound at residue Y129. T155 contributes to the FMN binding site. R164 lines the substrate pocket. K251 lines the FMN pocket. The Proton acceptor role is filled by H275. R278 contributes to the substrate binding site. 306-330 is a binding site for FMN; the sequence is DSGIRTGLDVVRMLALGADCTLLGR.

This sequence belongs to the FMN-dependent alpha-hydroxy acid dehydrogenase family. FMN serves as cofactor.

Its subcellular location is the cell inner membrane. It catalyses the reaction (S)-lactate + A = pyruvate + AH2. In terms of biological role, catalyzes the conversion of L-lactate to pyruvate. Is coupled to the respiratory chain. The protein is L-lactate dehydrogenase of Vibrio parahaemolyticus serotype O3:K6 (strain RIMD 2210633).